Consider the following 189-residue polypeptide: GTPase NRas (189 aa).

10–17 is a binding site for GTP; sequence GAGGVGKS. An Effector region motif is present at residues 32–40; sequence YDPTIEDSY. GTP contacts are provided by residues 57 to 61 and 116 to 119; these read DTAGQ and NKCD. The tract at residues 166 to 185 is hypervariable region; sequence YRMKKLNSNEDGNQGCMGLS. Residue Cys-181 is the site of S-palmitoyl cysteine attachment. Cys-186 carries the S-farnesyl cysteine lipid modification. Positions 187–189 are cleaved as a propeptide — removed in mature form; it reads IVM.

This sequence belongs to the small GTPase superfamily. Ras family. Palmitoylated by the ZDHHC9-GOLGA7 complex. Depalmitoylated by ABHD17A, ABHD17B and ABHD17C. A continuous cycle of de- and re-palmitoylation regulates rapid exchange between plasma membrane and Golgi.

Its subcellular location is the cell membrane. It is found in the golgi apparatus membrane. The catalysed reaction is GTP + H2O = GDP + phosphate + H(+). Its activity is regulated as follows. Alternates between an inactive form bound to GDP and an active form bound to GTP. Activated by a guanine nucleotide-exchange factor (GEF) and inactivated by a GTPase-activating protein (GAP). Ras proteins bind GDP/GTP and possess intrinsic GTPase activity. The sequence is that of GTPase NRas (NRAS) from Gallus gallus (Chicken).